We begin with the raw amino-acid sequence, 368 residues long: Alanine racemase (368 aa).

K34 functions as the Proton acceptor; specific for D-alanine in the catalytic mechanism. N6-(pyridoxal phosphate)lysine is present on K34. Position 132 (R132) interacts with substrate. Y261 serves as the catalytic Proton acceptor; specific for L-alanine. Residue M309 coordinates substrate.

This sequence belongs to the alanine racemase family. It depends on pyridoxal 5'-phosphate as a cofactor.

The enzyme catalyses L-alanine = D-alanine. It participates in amino-acid biosynthesis; D-alanine biosynthesis; D-alanine from L-alanine: step 1/1. Functionally, catalyzes the interconversion of L-alanine and D-alanine. May also act on other amino acids. The chain is Alanine racemase (alr) from Carboxydothermus hydrogenoformans (strain ATCC BAA-161 / DSM 6008 / Z-2901).